We begin with the raw amino-acid sequence, 881 residues long: Alanine--tRNA ligase (881 aa).

Zn(2+)-binding residues include His564, His568, Cys666, and His670.

It belongs to the class-II aminoacyl-tRNA synthetase family. The cofactor is Zn(2+).

Its subcellular location is the cytoplasm. It catalyses the reaction tRNA(Ala) + L-alanine + ATP = L-alanyl-tRNA(Ala) + AMP + diphosphate. Functionally, catalyzes the attachment of alanine to tRNA(Ala) in a two-step reaction: alanine is first activated by ATP to form Ala-AMP and then transferred to the acceptor end of tRNA(Ala). Also edits incorrectly charged Ser-tRNA(Ala) and Gly-tRNA(Ala) via its editing domain. The chain is Alanine--tRNA ligase from Caldicellulosiruptor saccharolyticus (strain ATCC 43494 / DSM 8903 / Tp8T 6331).